The sequence spans 863 residues: Glycerol-3-phosphate acyltransferase (863 aa).

Residues 1-29 (MPKKNSPLLPKETTTTQSSVDTSGSSNLT) form a disordered region. Over residues 12-29 (ETTTTQSSVDTSGSSNLT) the composition is skewed to polar residues. Positions 343-348 (SHRSHI) match the HXXXXD motif motif.

The protein belongs to the GPAT/DAPAT family.

The protein localises to the cell inner membrane. The enzyme catalyses sn-glycerol 3-phosphate + an acyl-CoA = a 1-acyl-sn-glycero-3-phosphate + CoA. It functions in the pathway phospholipid metabolism; CDP-diacylglycerol biosynthesis; CDP-diacylglycerol from sn-glycerol 3-phosphate: step 1/3. This chain is Glycerol-3-phosphate acyltransferase, found in Xylella fastidiosa (strain M12).